A 415-amino-acid polypeptide reads, in one-letter code: tRNA(Ile2) 2-agmatinylcytidine synthetase TiaS (415 aa).

This sequence belongs to the TiaS family.

The protein localises to the cytoplasm. The catalysed reaction is cytidine(34) in tRNA(Ile2) + agmatine + ATP + H2O = 2-agmatinylcytidine(34) in tRNA(Ile2) + AMP + 2 phosphate + 2 H(+). Functionally, ATP-dependent agmatine transferase that catalyzes the formation of 2-agmatinylcytidine (agm2C) at the wobble position (C34) of tRNA(Ile2), converting the codon specificity from AUG to AUA. The protein is tRNA(Ile2) 2-agmatinylcytidine synthetase TiaS of Methanocorpusculum labreanum (strain ATCC 43576 / DSM 4855 / Z).